The primary structure comprises 116 residues: Tyrosine-protein phosphatase 20 (116 aa).

Positions 1–116 (WMMIVEQKCR…EIGGDAPMVV (116 aa)) constitute a Tyrosine-protein phosphatase domain. Asp-84 lines the substrate pocket.

It belongs to the protein-tyrosine phosphatase family.

The enzyme catalyses O-phospho-L-tyrosyl-[protein] + H2O = L-tyrosyl-[protein] + phosphate. The protein is Tyrosine-protein phosphatase 20 (STY-20) of Styela plicata (Wrinkled sea squirt).